Here is a 156-residue protein sequence, read N- to C-terminus: Ribosomal RNA large subunit methyltransferase H (156 aa).

S-adenosyl-L-methionine-binding positions include leucine 73, glycine 104, and 123-128 (LSPLTL).

The protein belongs to the RNA methyltransferase RlmH family. In terms of assembly, homodimer.

It localises to the cytoplasm. It catalyses the reaction pseudouridine(1915) in 23S rRNA + S-adenosyl-L-methionine = N(3)-methylpseudouridine(1915) in 23S rRNA + S-adenosyl-L-homocysteine + H(+). Specifically methylates the pseudouridine at position 1915 (m3Psi1915) in 23S rRNA. This Pseudoalteromonas atlantica (strain T6c / ATCC BAA-1087) protein is Ribosomal RNA large subunit methyltransferase H.